A 542-amino-acid polypeptide reads, in one-letter code: Chaperonin GroEL (542 aa).

ATP contacts are provided by residues Thr29–Pro32, Asp86–Thr90, Gly413, Asn476–Ala478, and Asp492. A disordered region spans residues Lys521–Met542. Residues Pro524 to Gln535 are compositionally biased toward low complexity.

The protein belongs to the chaperonin (HSP60) family. As to quaternary structure, forms a cylinder of 14 subunits composed of two heptameric rings stacked back-to-back. Interacts with the co-chaperonin GroES.

The protein resides in the cytoplasm. It carries out the reaction ATP + H2O + a folded polypeptide = ADP + phosphate + an unfolded polypeptide.. Together with its co-chaperonin GroES, plays an essential role in assisting protein folding. The GroEL-GroES system forms a nano-cage that allows encapsulation of the non-native substrate proteins and provides a physical environment optimized to promote and accelerate protein folding. The sequence is that of Chaperonin GroEL from Limosilactobacillus reuteri subsp. reuteri (strain JCM 1112) (Lactobacillus reuteri).